The chain runs to 115 residues: Cell division topological specificity factor (115 aa).

The segment at Thr89–Ser115 is disordered.

This sequence belongs to the MinE family.

In terms of biological role, prevents the cell division inhibition by proteins MinC and MinD at internal division sites while permitting inhibition at polar sites. This ensures cell division at the proper site by restricting the formation of a division septum at the midpoint of the long axis of the cell. This chain is Cell division topological specificity factor, found in Prochlorococcus marinus (strain NATL2A).